We begin with the raw amino-acid sequence, 84 residues long: Small ribosomal subunit protein bS16 (84 aa).

Belongs to the bacterial ribosomal protein bS16 family.

The sequence is that of Small ribosomal subunit protein bS16 from Endomicrobium trichonymphae.